Reading from the N-terminus, the 468-residue chain is Glutamine synthetase (468 aa).

One can recognise a GS beta-grasp domain in the interval 13-97; sequence NEVKFVDLRF…IRCDILEPAT (85 aa). The GS catalytic domain occupies 105–468; it reads PRSIAKRAED…PVEFELYYSV (364 aa). Mg(2+) contacts are provided by glutamate 130 and glutamate 132. Position 208 (glutamate 208) interacts with ATP. 2 residues coordinate Mg(2+): glutamate 213 and glutamate 220. L-glutamate contacts are provided by residues 264–265 and glycine 265; that span reads NG. Histidine 269 contacts Mg(2+). ATP is bound by residues 271 to 273 and serine 273; that span reads HQS. The L-glutamate site is built by arginine 321, glutamate 327, and arginine 339. The ATP site is built by arginine 339, arginine 344, and lysine 352. Residue glutamate 357 participates in Mg(2+) binding. Residue arginine 359 coordinates L-glutamate. Tyrosine 397 is modified (O-AMP-tyrosine).

This sequence belongs to the glutamine synthetase family. Oligomer of 12 subunits arranged in the form of two hexameric ring. Mg(2+) serves as cofactor.

Its subcellular location is the cytoplasm. It catalyses the reaction L-glutamate + NH4(+) + ATP = L-glutamine + ADP + phosphate + H(+). The activity of this enzyme could be controlled by adenylation under conditions of abundant glutamine. In terms of biological role, catalyzes the ATP-dependent biosynthesis of glutamine from glutamate and ammonia. This Vibrio alginolyticus protein is Glutamine synthetase.